The following is a 133-amino-acid chain: Large ribosomal subunit protein bL21 (133 aa).

A disordered region spans residues 1–22 (MAEKPAAKPKAAAAKAEAKDQS).

Belongs to the bacterial ribosomal protein bL21 family. In terms of assembly, part of the 50S ribosomal subunit. Contacts protein L20.

This protein binds to 23S rRNA in the presence of protein L20. This chain is Large ribosomal subunit protein bL21, found in Prochlorococcus marinus (strain MIT 9303).